A 288-amino-acid polypeptide reads, in one-letter code: Acetyl-coenzyme A carboxylase carboxyl transferase subunit beta (288 aa).

One can recognise a CoA carboxyltransferase N-terminal domain in the interval 30-288 (IMTKCPKCKK…KMHQEVKTNA (259 aa)). Positions 34, 37, 53, and 56 each coordinate Zn(2+). The C4-type zinc finger occupies 34–56 (CPKCKKIMYTKELAENLNVCFNC).

This sequence belongs to the AccD/PCCB family. Acetyl-CoA carboxylase is a heterohexamer composed of biotin carboxyl carrier protein (AccB), biotin carboxylase (AccC) and two subunits each of ACCase subunit alpha (AccA) and ACCase subunit beta (AccD). It depends on Zn(2+) as a cofactor.

It is found in the cytoplasm. It carries out the reaction N(6)-carboxybiotinyl-L-lysyl-[protein] + acetyl-CoA = N(6)-biotinyl-L-lysyl-[protein] + malonyl-CoA. It participates in lipid metabolism; malonyl-CoA biosynthesis; malonyl-CoA from acetyl-CoA: step 1/1. Component of the acetyl coenzyme A carboxylase (ACC) complex. Biotin carboxylase (BC) catalyzes the carboxylation of biotin on its carrier protein (BCCP) and then the CO(2) group is transferred by the transcarboxylase to acetyl-CoA to form malonyl-CoA. The protein is Acetyl-coenzyme A carboxylase carboxyl transferase subunit beta of Staphylococcus saprophyticus subsp. saprophyticus (strain ATCC 15305 / DSM 20229 / NCIMB 8711 / NCTC 7292 / S-41).